We begin with the raw amino-acid sequence, 396 residues long: Tryptophan synthase beta chain (396 aa).

Position 86 is an N6-(pyridoxal phosphate)lysine (K86).

Belongs to the TrpB family. As to quaternary structure, tetramer of two alpha and two beta chains. It depends on pyridoxal 5'-phosphate as a cofactor.

The enzyme catalyses (1S,2R)-1-C-(indol-3-yl)glycerol 3-phosphate + L-serine = D-glyceraldehyde 3-phosphate + L-tryptophan + H2O. It functions in the pathway amino-acid biosynthesis; L-tryptophan biosynthesis; L-tryptophan from chorismate: step 5/5. The beta subunit is responsible for the synthesis of L-tryptophan from indole and L-serine. The protein is Tryptophan synthase beta chain of Aliivibrio fischeri (strain ATCC 700601 / ES114) (Vibrio fischeri).